The primary structure comprises 139 residues: Mediator of RNA polymerase II transcription subunit 31 (139 aa).

Residues 115 to 139 are disordered; that stretch reads ADDATLSQPQQEEDEKKVDVKKENE. Residues 128–139 are compositionally biased toward basic and acidic residues; that stretch reads DEKKVDVKKENE.

Belongs to the Mediator complex subunit 31 family. Component of the Mediator complex.

The protein resides in the nucleus. Its function is as follows. Component of the Mediator complex, a coactivator involved in the regulated transcription of nearly all RNA polymerase II-dependent genes. Mediator functions as a bridge to convey information from gene-specific regulatory proteins to the basal RNA polymerase II transcription machinery. Mediator is recruited to promoters by direct interactions with regulatory proteins and serves as a scaffold for the assembly of a functional preinitiation complex with RNA polymerase II and the general transcription factors. In Schizosaccharomyces pombe (strain 972 / ATCC 24843) (Fission yeast), this protein is Mediator of RNA polymerase II transcription subunit 31 (med31).